A 354-amino-acid chain; its full sequence is MTELKNDRYLRALLRQPVDVTPVWMMRQAGRYLPEYKATRAQAGDFMSLCKNAELACEVTLQPLRRYPLDAAILFSDILTVPDAMGLGLYFEAGEGPRFTSPVTCKADVDKLPIPDPEDELGYVMNAVRTIRRELKGEVPLIGFSGSPWTLATYMVEGGSSKAFTVIKKMMYADPQALHALLDKLAKSVTLYLNAQIKAGAQAVMIFDTWGGVLTGRDYQQFSLYYMHKIVDGLLRENDGRRVPVTLFTKGGGQWLEAMAETGCDALGLDWTTDIADARRRVGNKVALQGNMDPSMLYAPPARIEEEVATILAGFGHGEGHVFNLGHGIHQDVPLEHAGVFVEAVHRLSEQYHR.

Residues 27–31, aspartate 77, tyrosine 154, threonine 209, and histidine 327 each bind substrate; that span reads RQAGR.

It belongs to the uroporphyrinogen decarboxylase family. As to quaternary structure, homodimer.

It localises to the cytoplasm. It catalyses the reaction uroporphyrinogen III + 4 H(+) = coproporphyrinogen III + 4 CO2. The protein operates within porphyrin-containing compound metabolism; protoporphyrin-IX biosynthesis; coproporphyrinogen-III from 5-aminolevulinate: step 4/4. Its function is as follows. Catalyzes the decarboxylation of four acetate groups of uroporphyrinogen-III to yield coproporphyrinogen-III. The polypeptide is Uroporphyrinogen decarboxylase (Shigella dysenteriae serotype 1 (strain Sd197)).